Here is a 162-residue protein sequence, read N- to C-terminus: ATP-dependent Clp protease adapter protein CLPS1, chloroplastic (162 aa).

Residues 1-58 (MAASCLRPAPTASAQMMTRSPVAGLPRPCSALQRSGCTLQGAFGTFAPQTTRTFVVTW) constitute a chloroplast transit peptide.

This sequence belongs to the ClpS family.

The protein localises to the plastid. It localises to the chloroplast stroma. Small adapter protein that modulate the activity of plastid Clp protease system (CLPC). Probably involved in substrate selection for plastid CLPC. The chain is ATP-dependent Clp protease adapter protein CLPS1, chloroplastic from Chlamydomonas reinhardtii (Chlamydomonas smithii).